The following is a 419-amino-acid chain: D-amino acid dehydrogenase (419 aa).

3 to 17 (VLILGGGVVGVTSAY) provides a ligand contact to FAD.

The protein belongs to the DadA oxidoreductase family. It depends on FAD as a cofactor.

It catalyses the reaction a D-alpha-amino acid + A + H2O = a 2-oxocarboxylate + AH2 + NH4(+). It participates in amino-acid degradation; D-alanine degradation; NH(3) and pyruvate from D-alanine: step 1/1. In terms of biological role, oxidative deamination of D-amino acids. The sequence is that of D-amino acid dehydrogenase from Methylobacterium radiotolerans (strain ATCC 27329 / DSM 1819 / JCM 2831 / NBRC 15690 / NCIMB 10815 / 0-1).